The sequence spans 136 residues: MFKGILLCVLFAVLSANPLSQPEGFADEERDVRGLASFLGKALKAGLKNDDDVNERDVRGFASFLGKALKAALKIGANALGGAPQQREANDERRFADDEDDVNERDVRGFGSFLGKALKAALKIGANALGGAPQQR.

The N-terminal stretch at 1–26 (MFKGILLCVLFAVLSANPLSQPEGFA) is a signal peptide. Positions 27–136 (DEERDVRGLA…NALGGAPQQR (110 aa)) are excised as a propeptide. Residues 82–101 (GAPQQREANDERRFADDEDD) are disordered.

The protein belongs to the gastrin/cholecystokinin family. In terms of tissue distribution, expressed by the skin glands.

It localises to the secreted. The pharmacological activities of caerulein are quite similar to the physiological activities of gastrin and related peptides. The protein is Preprocaerulein type I' of Xenopus laevis (African clawed frog).